The chain runs to 449 residues: Uric acid permease PucJ (449 aa).

The next 13 helical transmembrane spans lie at 11–31, 41–61, 67–87, 91–111, 119–139, 158–178, 191–211, 229–249, 277–297, 313–333, 334–354, 372–392, and 401–421; these read LSLQHVLAMYAGAILVPLLVG, LSYLLAIDLLTCGVATLLQTL, GIGLPVMLGSSFVAVTPMIAI, YGIHAIYGSIIAAGVFIFLFA, VLFPPVVTGTVVTLIGLSLVP, EYGSLENLLLSVGVLVLILVL, VLIGIAAGTAAAAIMGKVSFS, APAFEIGPILTMLIVGIVIIV, AEGIAILIGGLFNAFPYNTFA, IVVTAGCILVCLGLIPKIAAL, ASAVPAAVLGGATVVMFGMVI, LLTIACSIALGIGASTAPGIF, and ILVSDGTITGSLTAIFLNLFF.

It belongs to the nucleobase:cation symporter-2 (NCS2) (TC 2.A.40) family.

The protein localises to the cell membrane. Functionally, uptake of uric acid. The sequence is that of Uric acid permease PucJ (pucJ) from Bacillus subtilis (strain 168).